Consider the following 469-residue polypeptide: Cyclin-dependent kinase 14 (469 aa).

Residues Ser-24, Ser-78, and Ser-95 each carry the phosphoserine modification. Residues 103–133 form a disordered region; sequence FKSSSAGKESPKVRRHSSPSSPTSPKFGKAD. Residue Ser-134 is modified to Phosphoserine. The Protein kinase domain maps to 135–419; that stretch reads YEKLEKLGEG…AQAALSHEYF (285 aa). Residues 141 to 149 and Lys-164 contribute to the ATP site; that span reads LGEGSYATV. Asp-256 acts as the Proton acceptor in catalysis. The disordered stretch occupies residues 449 to 469; sequence ESMRAFGKNNSYGKSLSNSKH. Over residues 456–469 the composition is skewed to polar residues; that stretch reads KNNSYGKSLSNSKH.

It belongs to the protein kinase superfamily. CMGC Ser/Thr protein kinase family. CDC2/CDKX subfamily. Found in a complex with LRP6, CCNY and CAPRIN2 during G2/M stage; CAPRIN2 functions as a scaffold for the complex by binding to CCNY via its N terminus and to CDK14 via its C terminus. Interacts with CCNY; CCNY mediates its recruitment to the plasma membrane and promotes phosphorylation of LRP6. Interacts with CCDN3 and CDKN1A. Interacts with SEPT8. Interacts with 14-3-3 proteina YWHAB, YWHAE, YWHAH and YWHAQ. As to expression, in the adult, widely expressed at low levels except in brain, kidney and testis where expression is high. In the brain, detected in cortex, hippocampus, dentate gyrus, amygdala cortex, parasubiculum and cerebellum. In the embryo, expressed predominantly in the nervous system.

It localises to the cell membrane. Its subcellular location is the cytoplasm. The protein resides in the nucleus. The enzyme catalyses L-seryl-[protein] + ATP = O-phospho-L-seryl-[protein] + ADP + H(+). It catalyses the reaction L-threonyl-[protein] + ATP = O-phospho-L-threonyl-[protein] + ADP + H(+). With respect to regulation, serine/threonine-protein kinase activity is promoted by associated cyclins CCDN3 and CCNY and repressed by CDKN1A. Functionally, serine/threonine-protein kinase involved in the control of the eukaryotic cell cycle, whose activity is controlled by an associated cyclin. Acts as a cell-cycle regulator of Wnt signaling pathway during G2/M phase by mediating the phosphorylation of LRP6 at 'Ser-1490', leading to the activation of the Wnt signaling pathway. Acts as a regulator of cell cycle progression and cell proliferation via its interaction with CCDN3. Phosphorylates RB1 in vitro, however the relevance of such result remains to be confirmed in vivo. May also play a role in meiosis, neuron differentiation and may indirectly act as a negative regulator of insulin-responsive glucose transport. The protein is Cyclin-dependent kinase 14 (Cdk14) of Mus musculus (Mouse).